A 240-amino-acid chain; its full sequence is 1-(5-phosphoribosyl)-5-[(5-phosphoribosylamino)methylideneamino] imidazole-4-carboxamide isomerase (240 aa).

D9 functions as the Proton acceptor in the catalytic mechanism. The active-site Proton donor is the D131.

It belongs to the HisA/HisF family.

The protein resides in the cytoplasm. It carries out the reaction 1-(5-phospho-beta-D-ribosyl)-5-[(5-phospho-beta-D-ribosylamino)methylideneamino]imidazole-4-carboxamide = 5-[(5-phospho-1-deoxy-D-ribulos-1-ylimino)methylamino]-1-(5-phospho-beta-D-ribosyl)imidazole-4-carboxamide. It participates in amino-acid biosynthesis; L-histidine biosynthesis; L-histidine from 5-phospho-alpha-D-ribose 1-diphosphate: step 4/9. The chain is 1-(5-phosphoribosyl)-5-[(5-phosphoribosylamino)methylideneamino] imidazole-4-carboxamide isomerase from Cytophaga hutchinsonii (strain ATCC 33406 / DSM 1761 / CIP 103989 / NBRC 15051 / NCIMB 9469 / D465).